The sequence spans 442 residues: Transposase InsG for insertion sequence element IS4 (442 aa).

The protein belongs to the transposase 11 family.

Involved in the transposition of the insertion sequence IS4. This chain is Transposase InsG for insertion sequence element IS4 (insG), found in Escherichia coli (strain K12).